Reading from the N-terminus, the 96-residue chain is uncharacterized protein (96 aa).

An N-terminal signal peptide occupies residues 1 to 21; the sequence is MLASVLILGAIAVGSAIPTIA.

This is an uncharacterized protein from Archaeoglobus fulgidus (strain ATCC 49558 / DSM 4304 / JCM 9628 / NBRC 100126 / VC-16).